The following is a 208-amino-acid chain: Uracil phosphoribosyltransferase (208 aa).

Residues arginine 78, arginine 103, and 130-138 (DPMLATGGS) contribute to the 5-phospho-alpha-D-ribose 1-diphosphate site. Residues isoleucine 193 and 198–200 (GDA) contribute to the uracil site. Aspartate 199 contributes to the 5-phospho-alpha-D-ribose 1-diphosphate binding site.

Belongs to the UPRTase family. It depends on Mg(2+) as a cofactor.

It carries out the reaction UMP + diphosphate = 5-phospho-alpha-D-ribose 1-diphosphate + uracil. The protein operates within pyrimidine metabolism; UMP biosynthesis via salvage pathway; UMP from uracil: step 1/1. Its activity is regulated as follows. Allosterically activated by GTP. Functionally, catalyzes the conversion of uracil and 5-phospho-alpha-D-ribose 1-diphosphate (PRPP) to UMP and diphosphate. The chain is Uracil phosphoribosyltransferase from Klebsiella pneumoniae (strain 342).